Here is a 127-residue protein sequence, read N- to C-terminus: Fatty acid binding protein 1-A, liver (127 aa).

The protein belongs to the calycin superfamily. Fatty-acid binding protein (FABP) family. As to expression, in adults, weakly expressed in the intestine.

The protein resides in the cytoplasm. Binds free fatty acids and their coenzyme A derivatives, bilirubin, and some other small molecules in the cytoplasm. May be involved in intracellular lipid transport. This Danio rerio (Zebrafish) protein is Fatty acid binding protein 1-A, liver.